The sequence spans 177 residues: Inner membrane protein p22 (177 aa).

Over 1-7 (MFNIKMT) the chain is Intravirion. Residues 8–28 (ISTLLIALIILVIIILVVFLY) traverse the membrane as a helical segment. Over 29–177 (YKKQQPPKKV…IALPRNHKHA (149 aa)) the chain is Virion surface.

Belongs to the asfivirus inner membrane protein p22 family.

It localises to the virion membrane. The protein resides in the host cell membrane. This is Inner membrane protein p22 from Ornithodoros (relapsing fever ticks).